The primary structure comprises 168 residues: G/U mismatch-specific DNA glycosylase (168 aa).

This sequence belongs to the uracil-DNA glycosylase (UDG) superfamily. TDG/mug family. In terms of assembly, binds DNA as a monomer.

The protein localises to the cytoplasm. The enzyme catalyses Specifically hydrolyzes mismatched double-stranded DNA and polynucleotides, releasing free uracil.. Excises ethenocytosine and uracil, which can arise by alkylation or deamination of cytosine, respectively, from the corresponding mispairs with guanine in ds-DNA. It is capable of hydrolyzing the carbon-nitrogen bond between the sugar-phosphate backbone of the DNA and the mispaired base. The complementary strand guanine functions in substrate recognition. Required for DNA damage lesion repair in stationary-phase cells. This chain is G/U mismatch-specific DNA glycosylase, found in Escherichia coli O9:H4 (strain HS).